Here is a 316-residue protein sequence, read N- to C-terminus: MNQLDGIKQFTTVVADSGDIESIRHYQPQDATTNPSLLLKAAGLEQYGHLIEDAIAWGKKHGGTQEQQVAAASDKLAVNFGAEILKSIPGRVSTEVDARLSFDKEKSIEKARHLVDLYQQQDVDKSRILIKLAATWEGIRAAEQLEKEGINCNLTLLFSFAQARACAEAGVYLISPFVGRIYDWYQARSPLEPYVVEEDPGVKSVRNIYDYFKQHRYETIVMGASFRRTEQILALTGCDRLTISPNLLKELKEKEEPVIRKLVPSSQMFHRPTPMTEAEFRWEHNQDAMAVEKLSEGIRLFAVDQRKLEDLLAAKL.

Catalysis depends on K131, which acts as the Schiff-base intermediate with substrate.

Belongs to the transaldolase family. Type 1 subfamily. As to quaternary structure, homodimer.

It is found in the cytoplasm. The catalysed reaction is D-sedoheptulose 7-phosphate + D-glyceraldehyde 3-phosphate = D-erythrose 4-phosphate + beta-D-fructose 6-phosphate. The protein operates within carbohydrate degradation; pentose phosphate pathway; D-glyceraldehyde 3-phosphate and beta-D-fructose 6-phosphate from D-ribose 5-phosphate and D-xylulose 5-phosphate (non-oxidative stage): step 2/3. In terms of biological role, transaldolase is important for the balance of metabolites in the pentose-phosphate pathway. The polypeptide is Transaldolase 2 (Salmonella choleraesuis (strain SC-B67)).